The sequence spans 79 residues: Sec-independent protein translocase protein TatA (79 aa).

The helical transmembrane segment at 1–21 threads the bilayer; the sequence is MGGFTSIWHWVIVLLVIVLLF. Positions 46-79 are disordered; sequence DDEEEAKNEPKTLDAQATQTKVHETSEIKSKQES. Residues 66–79 are compositionally biased toward basic and acidic residues; sequence KVHETSEIKSKQES.

The protein belongs to the TatA/E family. As to quaternary structure, the Tat system comprises two distinct complexes: a TatABC complex, containing multiple copies of TatA, TatB and TatC subunits, and a separate TatA complex, containing only TatA subunits. Substrates initially bind to the TatABC complex, which probably triggers association of the separate TatA complex to form the active translocon.

It localises to the cell inner membrane. Its function is as follows. Part of the twin-arginine translocation (Tat) system that transports large folded proteins containing a characteristic twin-arginine motif in their signal peptide across membranes. TatA could form the protein-conducting channel of the Tat system. This chain is Sec-independent protein translocase protein TatA, found in Helicobacter pylori (strain HPAG1).